A 464-amino-acid chain; its full sequence is tRNA(Ile)-lysidine synthase (464 aa).

30-35 provides a ligand contact to ATP; the sequence is SGGVDS.

This sequence belongs to the tRNA(Ile)-lysidine synthase family.

It localises to the cytoplasm. It carries out the reaction cytidine(34) in tRNA(Ile2) + L-lysine + ATP = lysidine(34) in tRNA(Ile2) + AMP + diphosphate + H(+). Functionally, ligates lysine onto the cytidine present at position 34 of the AUA codon-specific tRNA(Ile) that contains the anticodon CAU, in an ATP-dependent manner. Cytidine is converted to lysidine, thus changing the amino acid specificity of the tRNA from methionine to isoleucine. The sequence is that of tRNA(Ile)-lysidine synthase from Shewanella oneidensis (strain ATCC 700550 / JCM 31522 / CIP 106686 / LMG 19005 / NCIMB 14063 / MR-1).